The following is a 96-amino-acid chain: Aspartyl/glutamyl-tRNA(Asn/Gln) amidotransferase subunit C (96 aa).

The protein belongs to the GatC family. In terms of assembly, heterotrimer of A, B and C subunits.

The enzyme catalyses L-glutamyl-tRNA(Gln) + L-glutamine + ATP + H2O = L-glutaminyl-tRNA(Gln) + L-glutamate + ADP + phosphate + H(+). The catalysed reaction is L-aspartyl-tRNA(Asn) + L-glutamine + ATP + H2O = L-asparaginyl-tRNA(Asn) + L-glutamate + ADP + phosphate + 2 H(+). Its function is as follows. Allows the formation of correctly charged Asn-tRNA(Asn) or Gln-tRNA(Gln) through the transamidation of misacylated Asp-tRNA(Asn) or Glu-tRNA(Gln) in organisms which lack either or both of asparaginyl-tRNA or glutaminyl-tRNA synthetases. The reaction takes place in the presence of glutamine and ATP through an activated phospho-Asp-tRNA(Asn) or phospho-Glu-tRNA(Gln). This is Aspartyl/glutamyl-tRNA(Asn/Gln) amidotransferase subunit C from Sulfurimonas denitrificans (strain ATCC 33889 / DSM 1251) (Thiomicrospira denitrificans (strain ATCC 33889 / DSM 1251)).